The sequence spans 497 residues: Iron-sulfur cluster assembly factor IBA57, mitochondrial (497 aa).

A mitochondrion-targeting transit peptide spans 1-27 (MFISRRCRIKGFTLKNLLWFRSSSTRF). A disordered region spans residues 414-433 (PTLNPFTNKPPERTKRKQRP).

The protein belongs to the GcvT family. CAF17/IBA57 subfamily. Interacts with CCR4, ISA1 and ISA2.

It localises to the mitochondrion matrix. Required for lysine and glutamate prototrophy and mitochondrial genome maintenance. Has a role in the maturation of mitochondrial aconitase-type and radical-SAM Fe/S proteins biotin synthase and lipoic acid synthase. This chain is Iron-sulfur cluster assembly factor IBA57, mitochondrial, found in Saccharomyces cerevisiae (strain ATCC 204508 / S288c) (Baker's yeast).